The chain runs to 102 residues: Monothiol glutaredoxin-S8 (102 aa).

Positions 1–101 (MEKIQKMISE…PMLKRFGALW (101 aa)) constitute a Glutaredoxin domain. Cys-21 serves as a coordination point for [2Fe-2S] cluster. The Responsive for interaction with TGA factors motif lies at 99 to 102 (ALWL).

This sequence belongs to the glutaredoxin family. CC-type subfamily.

The protein resides in the cytoplasm. Its subcellular location is the nucleus. May only reduce GSH-thiol disulfides, but not protein disulfides. In Arabidopsis thaliana (Mouse-ear cress), this protein is Monothiol glutaredoxin-S8 (GRXS8).